A 93-amino-acid chain; its full sequence is Large ribosomal subunit protein uL23cz/uL23cy (93 aa).

The protein belongs to the universal ribosomal protein uL23 family. As to quaternary structure, part of the 50S ribosomal subunit.

It is found in the plastid. It localises to the chloroplast. In terms of biological role, binds to 23S rRNA. The sequence is that of Large ribosomal subunit protein uL23cz/uL23cy (rpl23-A) from Coffea arabica (Arabian coffee).